Consider the following 254-residue polypeptide: 3-deoxy-manno-octulosonate cytidylyltransferase (254 aa).

The protein belongs to the KdsB family.

The protein resides in the cytoplasm. The catalysed reaction is 3-deoxy-alpha-D-manno-oct-2-ulosonate + CTP = CMP-3-deoxy-beta-D-manno-octulosonate + diphosphate. It participates in nucleotide-sugar biosynthesis; CMP-3-deoxy-D-manno-octulosonate biosynthesis; CMP-3-deoxy-D-manno-octulosonate from 3-deoxy-D-manno-octulosonate and CTP: step 1/1. The protein operates within bacterial outer membrane biogenesis; lipopolysaccharide biosynthesis. In terms of biological role, activates KDO (a required 8-carbon sugar) for incorporation into bacterial lipopolysaccharide in Gram-negative bacteria. The polypeptide is 3-deoxy-manno-octulosonate cytidylyltransferase (Pseudomonas paraeruginosa (strain DSM 24068 / PA7) (Pseudomonas aeruginosa (strain PA7))).